The following is a 358-amino-acid chain: Protein FAM187B (358 aa).

Positions 1–17 (MLATLWLVGLSLPMLWA) are cleaved as a signal peptide. Residues 18-322 (QRLISCPYKN…DKADSVLRRL (305 aa)) are Extracellular-facing. N127 carries N-linked (GlcNAc...) asparagine glycosylation. Residues 323–343 (KLMVLSISVLAVGGLLCKVVF) traverse the membrane as a helical segment. The Cytoplasmic portion of the chain corresponds to 344–358 (RPVCGKKRSQVLLVK).

It belongs to the FAM187 family.

It is found in the membrane. The protein is Protein FAM187B (Fam187b) of Mus musculus (Mouse).